A 187-amino-acid chain; its full sequence is Calcium and integrin-binding family member 2 (187 aa).

EF-hand domains are found at residues 66–101 (RENP…LCES), 103–138 (PREL…LTKS), and 144–179 (EVVL…APDF). Positions 116, 118, 120, 127, 157, 159, 161, 163, and 168 each coordinate Ca(2+).

In terms of assembly, monomer. Homodimer. Interacts with WHRN and MYO7A. Interacts with ITGA2B (via C-terminus cytoplasmic tail region); the interactions are stabilized/increased in a calcium and magnesium-dependent manner. Interacts with ITGA7 (via C-terminus cytoplasmic tail region); the interactions are stabilized/increased in a calcium and magnesium-dependent manner. Interacts with TMC1. Interacts with TMC2.

It localises to the cytoplasm. Its subcellular location is the cell projection. The protein localises to the stereocilium. The protein resides in the photoreceptor inner segment. It is found in the cilium. It localises to the photoreceptor outer segment. Its subcellular location is the cell membrane. The protein localises to the sarcolemma. Its function is as follows. Calcium- and integrin-binding protein that plays a role in intracellular calcium homeostasis. Acts as an auxiliary subunit of the sensory mechanoelectrical transduction (MET) channel in hair cells. Essential for mechanoelectrical transduction (MET) currents in auditory hair cells and thereby required for hearing. Regulates the function of hair cell mechanotransduction by controlling the distribution of transmembrane channel-like proteins TMC1 and TMC2, and by regulating the function of the MET channels in hair cells. Required for the maintenance of auditory hair cell stereocilia bundle morphology and function and for hair-cell survival in the cochlea. Critical for proper photoreceptor cell maintenance and function. Plays a role in intracellular calcium homeostasis by decreasing ATP-induced calcium release. The chain is Calcium and integrin-binding family member 2 (Cib2) from Rattus norvegicus (Rat).